The primary structure comprises 392 residues: Acetyl-CoA acetyltransferase (392 aa).

Cys85 serves as the catalytic Acyl-thioester intermediate. Cys206, Ser207, Val209, and Lys332 together coordinate CoA. His336 serves as the catalytic Proton acceptor.

Belongs to the thiolase-like superfamily. Thiolase family. In terms of assembly, interacts with HMG-CoA synthase (HMGCS) that catalyzes the second step in the pathway and with a DUF35 protein. The acetoacetyl-CoA thiolase/HMG-CoA synthase complex channels the intermediate via a fused CoA-binding site, which allows for efficient coupling of the endergonic thiolase reaction with the exergonic HMGCS reaction.

The catalysed reaction is 2 acetyl-CoA = acetoacetyl-CoA + CoA. It participates in metabolic intermediate biosynthesis; (R)-mevalonate biosynthesis; (R)-mevalonate from acetyl-CoA: step 1/3. Functionally, catalyzes the condensation of two acetyl-coA molecules into acetoacetyl-CoA. Functions in the mevalonate (MVA) pathway leading to isopentenyl diphosphate (IPP), a key precursor for the biosynthesis of isoprenoid compounds that are building blocks of archaeal membrane lipids. This is Acetyl-CoA acetyltransferase from Methanocaldococcus jannaschii (strain ATCC 43067 / DSM 2661 / JAL-1 / JCM 10045 / NBRC 100440) (Methanococcus jannaschii).